Reading from the N-terminus, the 219-residue chain is U-scoloptoxin(11)-Sm7a (219 aa).

The first 15 residues, 1 to 15 (MYLFLMINYFVLANS), serve as a signal peptide directing secretion.

The protein belongs to the scoloptoxin-11 family. Contains 8 disulfide bonds. In terms of tissue distribution, expressed by the venom gland.

Its subcellular location is the secreted. The protein is U-scoloptoxin(11)-Sm7a of Scolopendra morsitans (Tanzanian blue ringleg centipede).